A 505-amino-acid polypeptide reads, in one-letter code: MFTSKSNSVSPSPSLEQADADALDISTKVQLYGVLWKRPFGRSSAKWSRRFFIIKESFLLYYSESERKSFETNKYFNIHPKGVIPLGGCLVEAREEPSMPYAMKISHQDFHGNVLLAAESEFEQTQWLEMLQESGKVTWKNAQLGEAMIKSLEAQGLQLAKEKQEYLDKLMEETEELCLQREQREELERLNQVLEAEKQQFEEVVQELKVEQEQIKRELELTARCLKGVEQEKKELRHLTESLQHTLEELSIEKKKTLEMLEEDKNQPQPLTNQSEQPPATDGLHSNLRQIEERMQELLAEKLLAEKRMKENEERSRALEEEREFYSSQSQALQNSLQELTAEKQQAEQELKAEVKVRMDLERRLREAEAALRSLEQGLNSKVRNKEKEERMRADVSHLKRFFEECIRNAELEAKMPVIMKNSVYIHKAATRRIKSCRFHRRRSSTSWNDMKPSQSFMTSQLEANNIEELKEVAKRLSRDQRFRESIYHIMATQPGASALPRGGK.

The 109-residue stretch at 28 to 136 (KVQLYGVLWK…WLEMLQESGK (109 aa)) folds into the PH domain. Residues 146 to 391 (EAMIKSLEAQ…KVRNKEKEER (246 aa)) are a coiled coil. The tract at residues 264–284 (DKNQPQPLTNQSEQPPATDGL) is disordered. A compositionally biased stretch (polar residues) spans 267 to 278 (QPQPLTNQSEQP). The residue at position 502 (Arg502) is an Omega-N-methylarginine.

This sequence belongs to the PLEKHD1 family.

This is Pleckstrin homology domain-containing family D member 1 (Plekhd1) from Rattus norvegicus (Rat).